The primary structure comprises 431 residues: Glutamate-1-semialdehyde 2,1-aminomutase (431 aa).

K270 carries the N6-(pyridoxal phosphate)lysine modification.

This sequence belongs to the class-III pyridoxal-phosphate-dependent aminotransferase family. HemL subfamily. In terms of assembly, homodimer. The cofactor is pyridoxal 5'-phosphate.

Its subcellular location is the cytoplasm. It catalyses the reaction (S)-4-amino-5-oxopentanoate = 5-aminolevulinate. The protein operates within porphyrin-containing compound metabolism; protoporphyrin-IX biosynthesis; 5-aminolevulinate from L-glutamyl-tRNA(Glu): step 2/2. The chain is Glutamate-1-semialdehyde 2,1-aminomutase from Limosilactobacillus reuteri subsp. reuteri (strain JCM 1112) (Lactobacillus reuteri).